The sequence spans 2177 residues: Mediator of RNA polymerase II transcription subunit 12 (2177 aa).

Positions 12–35 are disordered; the sequence is RPLKRPRLGPPDVYPQDPKQKEDE. Lys-80 carries the post-translational modification N6-acetyllysine. At Tyr-166 the chain carries Phosphotyrosine. Disordered stretches follow at residues 323–344, 627–669, 690–717, and 1241–1266; these read QSTS…TPST, GAPG…MDID, TMPC…PKEK, and TVTG…QGGR. Ser-635, Ser-665, Ser-698, and Ser-700 each carry phosphoserine. The segment covering 702-717 has biased composition (basic and acidic residues); it reads EKPDVEKEVKPPPKEK. 2 positions are modified to phosphoserine: Ser-1258 and Ser-1269. The span at 1394 to 1411 shows a compositional bias: low complexity; that stretch reads AETGSSSGSTASNMPSSS. Disordered regions lie at residues 1394–1415, 1450–1474, and 1738–1829; these read AETG…KTKP, ELEK…KSMS, and YLEP…PGSI. Composition is skewed to basic and acidic residues over residues 1450-1469 and 1758-1771; these read ELEK…DRQK and EPEK…KTDK. The interaction with CTNNB1 and GLI3 stretch occupies residues 1616–2051; the sequence is LAKKLQKELG…VRSTAILPEQ (436 aa). The span at 1784–1793 shows a compositional bias: basic residues; the sequence is KKSTKGKKRS. Lys-1798 carries the post-translational modification N6-acetyllysine. Arg-1899 is subject to Asymmetric dimethylarginine; alternate. Arg-1899 is subject to Omega-N-methylarginine; alternate. At Arg-1910 the chain carries Omega-N-methylarginine. 2 disordered regions span residues 1919–1938 and 1967–1989; these read QGML…SYGL and SYSS…DPTR. Residues 1927–1938 are compositionally biased toward polar residues; the sequence is VHQMTPSSSYGL. The segment covering 1967 to 1980 has biased composition (low complexity); that stretch reads SYSSQPYQSTHPST. Arg-1994 and Arg-2015 each carry asymmetric dimethylarginine. 3 stretches are compositionally biased toward low complexity: residues 2115-2125, 2133-2149, and 2158-2171; these read QHQQQQQQQAA, SQPQ…QQQQ, and LQQQ…QPST. Disordered regions lie at residues 2115–2149 and 2158–2177; these read QHQQ…QQQQ and LQQQ…FGRY.

It belongs to the Mediator complex subunit 12 family. As to quaternary structure, component of the Mediator complex, which is composed of MED1, MED4, MED6, MED7, MED8, MED9, MED10, MED11, MED12, MED13, MED13L, MED14, MED15, MED16, MED17, MED18, MED19, MED20, MED21, MED22, MED23, MED24, MED25, MED26, MED27, MED29, MED30, MED31, CCNC, CDK8 and CDC2L6/CDK11. The MED12, MED13, CCNC and CDK8 subunits form a distinct module termed the CDK8 module. Mediator containing the CDK8 module is less active than Mediator lacking this module in supporting transcriptional activation. Individual preparations of the Mediator complex lacking one or more distinct subunits have been variously termed ARC, CRSP, DRIP, PC2, SMCC and TRAP. Also interacts with CTNNB1 and GLI3. As to expression, ubiquitous.

It is found in the nucleus. In terms of biological role, component of the Mediator complex, a coactivator involved in the regulated transcription of nearly all RNA polymerase II-dependent genes. Mediator functions as a bridge to convey information from gene-specific regulatory proteins to the basal RNA polymerase II transcription machinery. Mediator is recruited to promoters by direct interactions with regulatory proteins and serves as a scaffold for the assembly of a functional pre-initiation complex with RNA polymerase II and the general transcription factors. This subunit may specifically regulate transcription of targets of the Wnt signaling pathway and SHH signaling pathway. This chain is Mediator of RNA polymerase II transcription subunit 12 (MED12), found in Homo sapiens (Human).